The sequence spans 179 residues: Large ribosomal subunit protein uL5 (179 aa).

Belongs to the universal ribosomal protein uL5 family. In terms of assembly, part of the 50S ribosomal subunit; part of the 5S rRNA/L5/L18/L25 subcomplex. Contacts the 5S rRNA and the P site tRNA. Forms a bridge to the 30S subunit in the 70S ribosome.

Functionally, this is one of the proteins that bind and probably mediate the attachment of the 5S RNA into the large ribosomal subunit, where it forms part of the central protuberance. In the 70S ribosome it contacts protein S13 of the 30S subunit (bridge B1b), connecting the 2 subunits; this bridge is implicated in subunit movement. Contacts the P site tRNA; the 5S rRNA and some of its associated proteins might help stabilize positioning of ribosome-bound tRNAs. The sequence is that of Large ribosomal subunit protein uL5 from Nitratidesulfovibrio vulgaris (strain DSM 19637 / Miyazaki F) (Desulfovibrio vulgaris).